Consider the following 365-residue polypeptide: Medium chain reductase pydE (365 aa).

The Enoyl reductase (ER) domain occupies 21-362; it reads KLIDSLPVPP…SKRARGKVLI (342 aa). Residues 185–188, tyrosine 226, 274–275, and 354–355 each bind NADP(+); these read SGSV, IG, and KR.

Belongs to the zinc-containing alcohol dehydrogenase family. As to quaternary structure, monomer.

It participates in mycotoxin biosynthesis. Functionally, medium chain reductase; part of the gene cluster that mediates the biosynthesis of pyrrocidines, fungal natural products containing a macrocyclic para-cyclophane connected to a decahydrofluorene ring system that show potent antibiotic activities toward Gram-negative bacteria. Within the pathway, pydE functions synergistically with pydB, pydX and pydZ to form the cyclophane. The pathway begins with the PKS-NRPS pydA which, with the help of the trans-enoyl reductase pydC, synthesizes the polyketide-tyrosyl acyl thioester product which can be reductively off-loaded by the terminal reductase (R) domain in pydA. The alpha/beta hydrolase pydG is then required to catalyze the subsequent Knoevenagel condensation that affords the 3-pyrrolin-2-one ring, whereas the four proteins pydB, pydE, pydX and pydZ then function synergistically to form the cyclophane. PydB and the membrane-bound pydX and pydZ are lipid-binding proteins that can sequester and mold the pdyG product into the inverse S-shape. Binding of the medium chain reductase pydE to the complex would trigger the cascade oxidative cyclization. PydY is involved in the Diels-Alder cycloaddition that forms the decahydrofluorene core. Additional non-enzymatic hydroxylation yields pyrrocidine A2 which can be further reduced into pyrrocidine B by an endogenous reductase. The chain is Medium chain reductase pydE from Acremonium sp.